We begin with the raw amino-acid sequence, 453 residues long: Bifunctional protein GlmU (453 aa).

The tract at residues 1 to 225 (MNIVILAAGT…GWETLGVNSK (225 aa)) is pyrophosphorylase. UDP-N-acetyl-alpha-D-glucosamine contacts are provided by residues 6–9 (LAAG), Lys-20, Gln-71, 76–77 (GT), 98–100 (YGD), Gly-135, Glu-150, Asn-165, and Asn-223. A Mg(2+)-binding site is contributed by Asp-100. Position 223 (Asn-223) interacts with Mg(2+). The interval 226–246 (AQLAELERIHQRNLADALLAA) is linker. The tract at residues 247-453 (GVTLADPARI…GYVRPVKKKS (207 aa)) is N-acetyltransferase. Arg-329 and Lys-347 together coordinate UDP-N-acetyl-alpha-D-glucosamine. Catalysis depends on His-359, which acts as the Proton acceptor. UDP-N-acetyl-alpha-D-glucosamine-binding residues include Tyr-362 and Asn-373. Acetyl-CoA is bound by residues Ala-376, 382–383 (NY), Ser-401, and Ala-419.

This sequence in the N-terminal section; belongs to the N-acetylglucosamine-1-phosphate uridyltransferase family. In the C-terminal section; belongs to the transferase hexapeptide repeat family. As to quaternary structure, homotrimer. Mg(2+) serves as cofactor.

Its subcellular location is the cytoplasm. The enzyme catalyses alpha-D-glucosamine 1-phosphate + acetyl-CoA = N-acetyl-alpha-D-glucosamine 1-phosphate + CoA + H(+). It carries out the reaction N-acetyl-alpha-D-glucosamine 1-phosphate + UTP + H(+) = UDP-N-acetyl-alpha-D-glucosamine + diphosphate. It functions in the pathway nucleotide-sugar biosynthesis; UDP-N-acetyl-alpha-D-glucosamine biosynthesis; N-acetyl-alpha-D-glucosamine 1-phosphate from alpha-D-glucosamine 6-phosphate (route II): step 2/2. It participates in nucleotide-sugar biosynthesis; UDP-N-acetyl-alpha-D-glucosamine biosynthesis; UDP-N-acetyl-alpha-D-glucosamine from N-acetyl-alpha-D-glucosamine 1-phosphate: step 1/1. Its pathway is bacterial outer membrane biogenesis; LPS lipid A biosynthesis. In terms of biological role, catalyzes the last two sequential reactions in the de novo biosynthetic pathway for UDP-N-acetylglucosamine (UDP-GlcNAc). The C-terminal domain catalyzes the transfer of acetyl group from acetyl coenzyme A to glucosamine-1-phosphate (GlcN-1-P) to produce N-acetylglucosamine-1-phosphate (GlcNAc-1-P), which is converted into UDP-GlcNAc by the transfer of uridine 5-monophosphate (from uridine 5-triphosphate), a reaction catalyzed by the N-terminal domain. The chain is Bifunctional protein GlmU from Burkholderia pseudomallei (strain K96243).